The following is a 399-amino-acid chain: Phosphoglycerate kinase (399 aa).

Residues 22–24 (DFN), Arg38, 61–64 (HLGR), Arg120, and Arg153 contribute to the substrate site. ATP contacts are provided by residues Lys204, Glu326, and 352-355 (GGDT).

This sequence belongs to the phosphoglycerate kinase family. As to quaternary structure, monomer.

The protein resides in the cytoplasm. It catalyses the reaction (2R)-3-phosphoglycerate + ATP = (2R)-3-phospho-glyceroyl phosphate + ADP. Its pathway is carbohydrate degradation; glycolysis; pyruvate from D-glyceraldehyde 3-phosphate: step 2/5. The chain is Phosphoglycerate kinase from Pelobacter propionicus (strain DSM 2379 / NBRC 103807 / OttBd1).